Here is a 197-residue protein sequence, read N- to C-terminus: 7-methyl-GTP pyrophosphatase (197 aa).

Aspartate 73 acts as the Proton acceptor in catalysis.

This sequence belongs to the Maf family. YceF subfamily. Requires a divalent metal cation as cofactor.

Its subcellular location is the cytoplasm. It catalyses the reaction N(7)-methyl-GTP + H2O = N(7)-methyl-GMP + diphosphate + H(+). Functionally, nucleoside triphosphate pyrophosphatase that hydrolyzes 7-methyl-GTP (m(7)GTP). May have a dual role in cell division arrest and in preventing the incorporation of modified nucleotides into cellular nucleic acids. This chain is 7-methyl-GTP pyrophosphatase, found in Alcanivorax borkumensis (strain ATCC 700651 / DSM 11573 / NCIMB 13689 / SK2).